We begin with the raw amino-acid sequence, 308 residues long: Oxygen-dependent coproporphyrinogen-III oxidase (308 aa).

Serine 100 lines the substrate pocket. Residues histidine 104 and histidine 114 each coordinate a divalent metal cation. The active-site Proton donor is the histidine 114. Position 116 to 118 (asparagine 116 to arginine 118) interacts with substrate. A divalent metal cation-binding residues include histidine 153 and histidine 183. An important for dimerization region spans residues tyrosine 248 to lysine 283. Position 266 to 268 (glycine 266 to arginine 268) interacts with substrate.

The protein belongs to the aerobic coproporphyrinogen-III oxidase family. As to quaternary structure, homodimer. A divalent metal cation is required as a cofactor.

The protein localises to the cytoplasm. It catalyses the reaction coproporphyrinogen III + O2 + 2 H(+) = protoporphyrinogen IX + 2 CO2 + 2 H2O. Its pathway is porphyrin-containing compound metabolism; protoporphyrin-IX biosynthesis; protoporphyrinogen-IX from coproporphyrinogen-III (O2 route): step 1/1. In terms of biological role, involved in the heme biosynthesis. Catalyzes the aerobic oxidative decarboxylation of propionate groups of rings A and B of coproporphyrinogen-III to yield the vinyl groups in protoporphyrinogen-IX. In Francisella tularensis subsp. holarctica (strain OSU18), this protein is Oxygen-dependent coproporphyrinogen-III oxidase.